A 540-amino-acid polypeptide reads, in one-letter code: Keratin, type II cytoskeletal 73 (540 aa).

A head region spans residues 1 to 131; that stretch reads MSRQFTYKSG…DPEIQKVCAQ (131 aa). Residues 132 to 167 form a coil 1A region; the sequence is EREQIKALNNKFASFIDKVRFLEQQNQVLGTKWELL. In terms of domain architecture, IF rod spans 132–445; it reads EREQIKALNN…KLLEGEECRM (314 aa). The interval 168–186 is linker 1; the sequence is QQQDLDNCKNNLEPILEGY. The coil 1B stretch occupies residues 187–278; that stretch reads ISNLRKQLEM…CLYEGEIAQM (92 aa). Positions 279–302 are linker 12; sequence QSHISDTSVILSMDNNRNLDLNSI. The coil 2 stretch occupies residues 303–441; sequence IAEVRAQYED…ATYRKLLEGE (139 aa). The tail stretch occupies residues 442–540; it reads ECRMSGEYTN…LSSPTKKTPR (99 aa). Residues 509–540 form a disordered region; the sequence is GEAKTRLGSTSEIKDLLGKTPALSSPTKKTPR. Residues 530 to 540 are compositionally biased toward polar residues; sequence ALSSPTKKTPR.

It belongs to the intermediate filament family. As to quaternary structure, heterotetramer of two type I and two type II keratins.

Has a role in hair formation. Specific component of keratin intermediate filaments in the inner root sheath (IRS) of the hair follicle. The protein is Keratin, type II cytoskeletal 73 (KRT73) of Bos taurus (Bovine).